The primary structure comprises 192 residues: Xanthine phosphoribosyltransferase (192 aa).

Positions 20 and 27 each coordinate xanthine. 128–132 is a 5-phospho-alpha-D-ribose 1-diphosphate binding site; that stretch reads AHGEA. Residue K156 coordinates xanthine.

Belongs to the purine/pyrimidine phosphoribosyltransferase family. Xpt subfamily. As to quaternary structure, homodimer.

It localises to the cytoplasm. The catalysed reaction is XMP + diphosphate = xanthine + 5-phospho-alpha-D-ribose 1-diphosphate. The protein operates within purine metabolism; XMP biosynthesis via salvage pathway; XMP from xanthine: step 1/1. Functionally, converts the preformed base xanthine, a product of nucleic acid breakdown, to xanthosine 5'-monophosphate (XMP), so it can be reused for RNA or DNA synthesis. This Lactobacillus johnsonii (strain CNCM I-12250 / La1 / NCC 533) protein is Xanthine phosphoribosyltransferase.